A 364-amino-acid chain; its full sequence is Probable methyltransferase ICS2 (364 aa).

Residues tyrosine 18, cysteine 61, aspartate 98, leucine 99, serine 133, and phenylalanine 134 each coordinate S-adenosyl-L-homocysteine. The Mg(2+) site is built by asparagine 172, aspartate 258, phenylalanine 260, and asparagine 261.

It belongs to the methyltransferase superfamily. Type-7 methyltransferase family. Mg(2+) is required as a cofactor.

Functionally, no detectable N-methyltransferase activity. This chain is Probable methyltransferase ICS2, found in Camellia irrawadiensis (Burmese tea).